Consider the following 38-residue polypeptide: Anthranilate phosphoribosyltransferase (38 aa).

The protein belongs to the anthranilate phosphoribosyltransferase family. In terms of assembly, homodimer.

It carries out the reaction N-(5-phospho-beta-D-ribosyl)anthranilate + diphosphate = 5-phospho-alpha-D-ribose 1-diphosphate + anthranilate. The protein operates within amino-acid biosynthesis; L-tryptophan biosynthesis; L-tryptophan from chorismate: step 2/5. Its function is as follows. Catalyzes the transfer of the phosphoribosyl group of 5-phosphorylribose-1-pyrophosphate (PRPP) to anthranilate to yield N-(5'-phosphoribosyl)-anthranilate (PRA). This chain is Anthranilate phosphoribosyltransferase (trpD), found in Serratia marcescens.